The sequence spans 27 residues: Larval-specific very high density lipoprotein (27 aa).

Homodimer. Hemolymph.

It is found in the secreted. It localises to the extracellular space. Its function is as follows. Unknown (it might play a role in lipid transport and/or storage protein metabolism during metamorphosis). The polypeptide is Larval-specific very high density lipoprotein (Apis mellifera (Honeybee)).